The primary structure comprises 538 residues: Lipid scramblase CLPTM1L (538 aa).

Over 1–9 the chain is Cytoplasmic; the sequence is MFPKTSFTS. The chain crosses the membrane as a helical span at residues 10–30; sequence LIVGVFLLYVLHTCWVMYGIV. Residues 31–284 are Extracellular-facing; sequence YTKPCEKRRA…IKGIFVDTNL (254 aa). N-linked (GlcNAc...) asparagine glycosylation is found at Asn-90 and Asn-100. A disordered region spans residues 140–166; the sequence is ISLITGQDEPEKPDQQKQSSDSELDRP. An N-linked (GlcNAc...) asparagine glycan is attached at Asn-229. A helical transmembrane segment spans residues 285–305; the sequence is YFLALTFFVAAFHLLFDFLAF. At 306 to 324 the chain is on the cytoplasmic side; that stretch reads KNDISFWKHKKSMVGMSSK. A helical membrane pass occupies residues 325–341; it reads AVLWRCFSTIVIFLYLL. The Extracellular segment spans residues 342–402; that stretch reads DEQTSLLVLV…TEEYDTLAMK (61 aa). The helical transmembrane segment at 403 to 423 threads the bilayer; it reads YLSYLLYPLCVGGAVYALVFV. Residues 424 to 428 lie on the Cytoplasmic side of the membrane; sequence KYKSW. Residues 429-449 form a helical membrane-spanning segment; that stretch reads YSWIINSLVNGVYAFGFLFML. Over 450 to 538 the chain is Extracellular; it reads PQLFVNYKLK…EKPKGKSHED (89 aa).

Belongs to the CLPTM1 family.

Its subcellular location is the endoplasmic reticulum membrane. The catalysed reaction is a 6-(alpha-D-glucosaminyl)-1-(1,2-diacyl-sn-glycero-3-phospho)-1D-myo-inositol(in) = a 6-(alpha-D-glucosaminyl)-1-(1,2-diacyl-sn-glycero-3-phospho)-1D-myo-inositol(out). It catalyses the reaction 6-(alpha-D-glucosaminyl)-(1-octadecanoyl,2-(9Z)-octadecenoyl-sn-glycero-3-phospho)-1D-myo-inositol(in) = 6-(alpha-D-glucosaminyl)-(1-octadecanoyl,2-(9Z)-octadecenoyl-sn-glycero-3-phospho)-1D-myo-inositol(out). It carries out the reaction a 1,2-diacyl-sn-glycero-3-phospho-(1D-myo-inositol)(in) = a 1,2-diacyl-sn-glycero-3-phospho-(1D-myo-inositol)(out). The enzyme catalyses a 1,2-diacyl-sn-glycero-3-phosphocholine(in) = a 1,2-diacyl-sn-glycero-3-phosphocholine(out). The catalysed reaction is a 1,2-diacyl-sn-glycero-3-phosphoethanolamine(in) = a 1,2-diacyl-sn-glycero-3-phosphoethanolamine(out). In terms of biological role, scramblase that mediates the translocation of glucosaminylphosphatidylinositol (alpha-D-GlcN-(1-6)-(1,2-diacyl-sn-glycero-3-phospho)-1D-myo-inositol, GlcN-PI) across the endoplasmic reticulum (ER) membrane, from the cytosolic leaflet to the luminal leaflet of the ER membrane, where it participates in the biosynthesis of glycosylphosphatidylinositol (GPI). GPI is a lipid glycoconjugate involved in post-translational modification of proteins. Can also translocate 1,2-diacyl-sn-glycero-3-phospho-(1D-myo-inositol) (phosphatidylinositol or PI), as well as several other phospholipids (1,2-diacyl-sn-glycero-3-phosphocholine, 1,2-diacyl-sn-glycero-3-phosphoethanolamine), and N-acetylglucosaminylphosphatidylinositol (GlcNAc-PI) in vitro. This chain is Lipid scramblase CLPTM1L (clptm1l), found in Danio rerio (Zebrafish).